The sequence spans 471 residues: Adenosylhomocysteinase (471 aa).

Positions 60, 135, and 196 each coordinate substrate. 197-199 (TTT) contacts NAD(+). The substrate site is built by Lys226 and Asp230. NAD(+) contacts are provided by residues Asn231, 260-265 (GYGDVG), Glu283, Asn318, 339-341 (IGH), and Asn387.

The protein belongs to the adenosylhomocysteinase family. The cofactor is NAD(+).

Its subcellular location is the cytoplasm. The enzyme catalyses S-adenosyl-L-homocysteine + H2O = L-homocysteine + adenosine. The protein operates within amino-acid biosynthesis; L-homocysteine biosynthesis; L-homocysteine from S-adenosyl-L-homocysteine: step 1/1. Its function is as follows. May play a key role in the regulation of the intracellular concentration of adenosylhomocysteine. This Chlorobaculum parvum (strain DSM 263 / NCIMB 8327) (Chlorobium vibrioforme subsp. thiosulfatophilum) protein is Adenosylhomocysteinase.